The sequence spans 163 residues: UPF0262 protein RPB_4349 (163 aa).

The protein belongs to the UPF0262 family.

The protein is UPF0262 protein RPB_4349 of Rhodopseudomonas palustris (strain HaA2).